Consider the following 361-residue polypeptide: S-adenosylmethionine:tRNA ribosyltransferase-isomerase (361 aa).

Belongs to the QueA family. As to quaternary structure, monomer.

It localises to the cytoplasm. The enzyme catalyses 7-aminomethyl-7-carbaguanosine(34) in tRNA + S-adenosyl-L-methionine = epoxyqueuosine(34) in tRNA + adenine + L-methionine + 2 H(+). Its pathway is tRNA modification; tRNA-queuosine biosynthesis. Transfers and isomerizes the ribose moiety from AdoMet to the 7-aminomethyl group of 7-deazaguanine (preQ1-tRNA) to give epoxyqueuosine (oQ-tRNA). This is S-adenosylmethionine:tRNA ribosyltransferase-isomerase from Afipia carboxidovorans (strain ATCC 49405 / DSM 1227 / KCTC 32145 / OM5) (Oligotropha carboxidovorans).